We begin with the raw amino-acid sequence, 326 residues long: 4-hydroxy-3-methylbut-2-enyl diphosphate reductase (326 aa).

A [4Fe-4S] cluster-binding site is contributed by Cys22. The (2E)-4-hydroxy-3-methylbut-2-enyl diphosphate site is built by His51 and His84. His51 and His84 together coordinate dimethylallyl diphosphate. 2 residues coordinate isopentenyl diphosphate: His51 and His84. Cys106 contributes to the [4Fe-4S] cluster binding site. Residue His134 coordinates (2E)-4-hydroxy-3-methylbut-2-enyl diphosphate. Position 134 (His134) interacts with dimethylallyl diphosphate. Residue His134 coordinates isopentenyl diphosphate. Glu136 acts as the Proton donor in catalysis. Thr174 contributes to the (2E)-4-hydroxy-3-methylbut-2-enyl diphosphate binding site. Cys204 contributes to the [4Fe-4S] cluster binding site. Ser232, Ser233, Asn234, and Ser276 together coordinate (2E)-4-hydroxy-3-methylbut-2-enyl diphosphate. The dimethylallyl diphosphate site is built by Ser232, Ser233, Asn234, and Ser276. Positions 232, 233, 234, and 276 each coordinate isopentenyl diphosphate.

It belongs to the IspH family. [4Fe-4S] cluster is required as a cofactor.

The catalysed reaction is isopentenyl diphosphate + 2 oxidized [2Fe-2S]-[ferredoxin] + H2O = (2E)-4-hydroxy-3-methylbut-2-enyl diphosphate + 2 reduced [2Fe-2S]-[ferredoxin] + 2 H(+). It carries out the reaction dimethylallyl diphosphate + 2 oxidized [2Fe-2S]-[ferredoxin] + H2O = (2E)-4-hydroxy-3-methylbut-2-enyl diphosphate + 2 reduced [2Fe-2S]-[ferredoxin] + 2 H(+). The protein operates within isoprenoid biosynthesis; dimethylallyl diphosphate biosynthesis; dimethylallyl diphosphate from (2E)-4-hydroxy-3-methylbutenyl diphosphate: step 1/1. Its pathway is isoprenoid biosynthesis; isopentenyl diphosphate biosynthesis via DXP pathway; isopentenyl diphosphate from 1-deoxy-D-xylulose 5-phosphate: step 6/6. Functionally, catalyzes the conversion of 1-hydroxy-2-methyl-2-(E)-butenyl 4-diphosphate (HMBPP) into a mixture of isopentenyl diphosphate (IPP) and dimethylallyl diphosphate (DMAPP). Acts in the terminal step of the DOXP/MEP pathway for isoprenoid precursor biosynthesis. This is 4-hydroxy-3-methylbut-2-enyl diphosphate reductase from Bordetella bronchiseptica (strain ATCC BAA-588 / NCTC 13252 / RB50) (Alcaligenes bronchisepticus).